Here is a 127-residue protein sequence, read N- to C-terminus: MARKMIRVLLVEDEEINRVVARAALKAAGGGDVVDEAENGEVAVQRVRDAAAPYDLVLMDKQMPVMDGHEATRRIRGMGVTTPIVAVSSDGLPADVDAFITAGADDFTSKPLSKEKLGVILAKFRLA.

Positions 7–125 (RVLLVEDEEI…KLGVILAKFR (119 aa)) constitute a Response regulatory domain. Asp60 carries the 4-aspartylphosphate modification.

This sequence belongs to the ARR family. Type-C subfamily. In terms of processing, two-component system major event consists of a His-to-Asp phosphorelay between a sensor histidine kinase (HK) and a response regulator (RR). In plants, the His-to-Asp phosphorelay involves an additional intermediate named Histidine-containing phosphotransfer protein (HPt). This multistep phosphorelay consists of a His-Asp-His-Asp sequential transfer of a phosphate group between first a His and an Asp of the HK protein, followed by the transfer to a conserved His of the HPt protein and finally the transfer to an Asp in the receiver domain of the RR protein.

Functions as a response regulator involved in His-to-Asp phosphorelay signal transduction system. Phosphorylation of the Asp residue in the receiver domain activates the ability of the protein to promote the transcription of target genes. May directly activate some type-A response regulators in response to cytokinins. The protein is Two-component response regulator ORR41 of Oryza sativa subsp. japonica (Rice).